We begin with the raw amino-acid sequence, 883 residues long: Kinesin-like protein 5 (883 aa).

The Kinesin motor domain maps to 6–390 (SITVTVRVRP…LKYANRAKNI (385 aa)). Residue 144 to 151 (GATGCGKT) coordinates ATP. Coiled-coil stretches lie at residues 396–435 (RNMISVDRHVSQYVKAIVELREQISELENRLAQIDLSSQS) and 563–588 (LQDEVDLLKSIIENQVLDAQNKVDEF). The disordered stretch occupies residues 755–785 (VSPMLEDKPEPGLLIKSPLEKKQEVNSESTQ).

The protein belongs to the TRAFAC class myosin-kinesin ATPase superfamily. Kinesin family. Kinesin II subfamily. In terms of assembly, heterodimer with klp6.

The protein localises to the cytoplasm. The protein resides in the cytoskeleton. It localises to the chromosome. It is found in the centromere. Its subcellular location is the kinetochore. The protein localises to the spindle. Functionally, has a role in establishing metaphase during mitosis. Required for chromosome segregation where it generates tension during kinetochore capturing. In Schizosaccharomyces pombe (strain 972 / ATCC 24843) (Fission yeast), this protein is Kinesin-like protein 5 (klp5).